Consider the following 95-residue polypeptide: MAGSTYGLDKIAGVQGYLVVNPDGAVLASSGDLENDEKTAGVIVDMLQTASMIPLSGDSSHSLKRLSVHFGNFVLMATVTNQRIFIVKRPTTETE.

This sequence belongs to the LAMTOR4 family. Part of the Ragulator complex.

It localises to the lysosome. Regulator of the TOR pathway, a signaling cascade that promotes cell growth in response to growth factors, energy levels, and amino acids. As part of the Ragulator complex, may activate the TOR signaling cascade in response to amino acids. The chain is Ragulator complex protein LAMTOR4 homolog from Nematostella vectensis (Starlet sea anemone).